The following is a 1035-amino-acid chain: MSGSYPFIDIAALDSVREGFARGDAQLVLAHDLSTVLWVNGPGAKLFGYNRVEDLIEGQLDLPVATRRQIAAFSSENTSAPSAVAVRLGGGLRSELTHLHVSNIKLPDGVAALLVATQMPDNSAEAAISGLGDDSTHIALVDAVGKVVAASPRFALLDISASTLEDLIVEAGDATDRIVKRRIRTGSHSVPGAIARLTDTPALHLLCIVGDAPAQFQTAAEAVPLPDNAEAVLEEILPEQGDAPAQQAQKTHAEQPRPKTFAFDHDAPPARFIWKVGPDGTFSEISPDLAAVVGPNSADIVGRRFSDVANVFGFYTDGSIAALLLERDTWSGKRLLWPVEGTRLRVPVELAALPVYSRDREFLGFRGFGIVRPAEAEADPEEIGLALAGGIPQNRKPRKEPAETARMVGEDDVLALSEEVANDDQPAAVLPKPPLDITPTPGRRDSDKVISLLNSCAQEKVAADQAKFLKEKERATRPEGGLTKTERNAFREIAERLRKQGLANTRAESETPVSETSSIEPVEPTPPVKTRSEPIQPDETALLANLPVPVIIHSGDAIHYVNQALLDITGYESLDDIRSAGGVDVLFNSESDDGETRQSMVLRHADGSEEPVDAHLNAIAWRGGRALMLSLMPVTAADLPAPAELPAANDEEKQALEAHVEELKTILDTATDGVVLIDPEGRIRSMNHSASALFGYERDEAEGKFFSMLFAIESQRAAMDYLHGLSGNGVLSVLNDGREVIGREAKGGFIPLFMTIGKLPHTRGFCAVLRDITQWKRTEEELTNARKEAERASNQKTEFLARISHEIRTPLNAIIGFSELMADEKFGPIGNDRYRDYLRDINRSGNHVLALVNDLLDISKIEAGALDMQFEAVSLNDAIGEAIALMQPQANRERVIIRSSFQSNLPDIVADSRSIKQVALNLLSNAVRFTAPGGQVIVSTSYELNGDVVMRVRDTGIGMSKSEVEQALKPFRQINALEGRKAESAKDWRNEGTGLGLPLTKAMVEANRAQFAIDSNPGQGTVVEIVFPPTRVLAD.

Positions M1–D613 are important for polar localization. Residues Q500–E533 form a disordered region. The interaction with DivK stretch occupies residues A614–D1035. Residues H659–V730 form the PAS domain. The Histidine kinase domain maps to R802–R1031. H805 carries the phosphohistidine; by autocatalysis modification.

Interacts with DivK.

It is found in the cytoplasm. It catalyses the reaction ATP + protein L-histidine = ADP + protein N-phospho-L-histidine.. Its function is as follows. Functions as a polar differentiation marker. Essential protein that, by localizing in the old pole of dividing cells, controls cell division and maturation, probably through control of DivK phosphorylation status and cellular distribution, which in turn regulates CtrA, a transcriptional regulator of the minB operon. The asymmetrical localization of this protein is probably required for cells to enter a new division cycle. The sequence is that of Cell-division control histidine kinase PdhS (pdhS) from Brucella suis biovar 1 (strain 1330).